The sequence spans 267 residues: Hydroxyethylthiazole kinase 2 (267 aa).

A substrate-binding site is contributed by Met-41. The ATP site is built by Lys-116 and Thr-166. Residue Gly-193 coordinates substrate.

Belongs to the Thz kinase family. Mg(2+) is required as a cofactor.

The catalysed reaction is 5-(2-hydroxyethyl)-4-methylthiazole + ATP = 4-methyl-5-(2-phosphooxyethyl)-thiazole + ADP + H(+). The protein operates within cofactor biosynthesis; thiamine diphosphate biosynthesis; 4-methyl-5-(2-phosphoethyl)-thiazole from 5-(2-hydroxyethyl)-4-methylthiazole: step 1/1. Catalyzes the phosphorylation of the hydroxyl group of 4-methyl-5-beta-hydroxyethylthiazole (THZ). The polypeptide is Hydroxyethylthiazole kinase 2 (Streptococcus pneumoniae serotype 4 (strain ATCC BAA-334 / TIGR4)).